The primary structure comprises 540 residues: Chaperonin GroEL (540 aa).

Residues 30–33, 87–91, Gly-415, and Asp-496 each bind ATP; these read TLGP and DGTTT.

This sequence belongs to the chaperonin (HSP60) family. As to quaternary structure, forms a cylinder of 14 subunits composed of two heptameric rings stacked back-to-back. Interacts with the co-chaperonin GroES.

Its subcellular location is the cytoplasm. The catalysed reaction is ATP + H2O + a folded polypeptide = ADP + phosphate + an unfolded polypeptide.. Its function is as follows. Together with its co-chaperonin GroES, plays an essential role in assisting protein folding. The GroEL-GroES system forms a nano-cage that allows encapsulation of the non-native substrate proteins and provides a physical environment optimized to promote and accelerate protein folding. This chain is Chaperonin GroEL, found in Symbiobacterium thermophilum (strain DSM 24528 / JCM 14929 / IAM 14863 / T).